A 255-amino-acid chain; its full sequence is Uracil-DNA glycosylase (255 aa).

D93 functions as the Proton acceptor in the catalytic mechanism.

The protein belongs to the uracil-DNA glycosylase (UDG) superfamily. UNG family.

It is found in the host nucleus. The catalysed reaction is Hydrolyzes single-stranded DNA or mismatched double-stranded DNA and polynucleotides, releasing free uracil.. Excises uracil residues from the DNA which can arise as a result of misincorporation of dUMP residues by DNA polymerase or deamination of cytosines. Therefore may reduce deleterious uracil incorporation into the viral genome, particularly in terminally differentiated cells which lack DNA repair enzymes. This chain is Uracil-DNA glycosylase (U81), found in Human herpesvirus 6A (strain Uganda-1102) (HHV-6 variant A).